The primary structure comprises 273 residues: Thiazole synthase (273 aa).

The Schiff-base intermediate with DXP role is filled by Lys113. Residues Gly174, 201–202 (AG), and 223–224 (NT) each bind 1-deoxy-D-xylulose 5-phosphate.

Belongs to the ThiG family. As to quaternary structure, homotetramer. Forms heterodimers with either ThiH or ThiS.

The protein resides in the cytoplasm. The catalysed reaction is [ThiS sulfur-carrier protein]-C-terminal-Gly-aminoethanethioate + 2-iminoacetate + 1-deoxy-D-xylulose 5-phosphate = [ThiS sulfur-carrier protein]-C-terminal Gly-Gly + 2-[(2R,5Z)-2-carboxy-4-methylthiazol-5(2H)-ylidene]ethyl phosphate + 2 H2O + H(+). The protein operates within cofactor biosynthesis; thiamine diphosphate biosynthesis. Functionally, catalyzes the rearrangement of 1-deoxy-D-xylulose 5-phosphate (DXP) to produce the thiazole phosphate moiety of thiamine. Sulfur is provided by the thiocarboxylate moiety of the carrier protein ThiS. In vitro, sulfur can be provided by H(2)S. This chain is Thiazole synthase, found in Salinibacter ruber (strain DSM 13855 / M31).